Consider the following 75-residue polypeptide: Small ribosomal subunit protein bS18 (75 aa).

Belongs to the bacterial ribosomal protein bS18 family. As to quaternary structure, part of the 30S ribosomal subunit. Forms a tight heterodimer with protein bS6.

In terms of biological role, binds as a heterodimer with protein bS6 to the central domain of the 16S rRNA, where it helps stabilize the platform of the 30S subunit. The chain is Small ribosomal subunit protein bS18 from Glaesserella parasuis serovar 5 (strain SH0165) (Haemophilus parasuis).